A 580-amino-acid chain; its full sequence is Putative adenine deaminase YerA (580 aa).

Serine 399 carries the phosphoserine modification.

It belongs to the metallo-dependent hydrolases superfamily. Adenine deaminase family.

The enzyme catalyses adenine + H2O + H(+) = hypoxanthine + NH4(+). This chain is Putative adenine deaminase YerA (yerA), found in Bacillus subtilis (strain 168).